The sequence spans 702 residues: Zinc finger CCCH domain-containing protein 62 (702 aa).

Residues 1-77 form a disordered region; that stretch reads MAAPAADDDD…SYDDPTFDPA (77 aa). A compositionally biased stretch (acidic residues) spans 18 to 54; sequence EEDDGEEEEGSEEEVESDDEEEEEGEGYDWSEEDDPE. In terms of domain architecture, SAP spans 132–166; it reads LEKLKVYECKAYLRMHKLRLSGNKEVLLTRIRGQI. Disordered regions lie at residues 288 to 349, 405 to 532, 546 to 602, and 634 to 673; these read EKHA…NTVQ, SRTS…QQQP, GGTS…RETH, and QMSQ…NPQR. Basic and acidic residues predominate over residues 298–325; the sequence is KTREVRIKDKENERMRRLNRNKENKSKG. 2 stretches are compositionally biased toward polar residues: residues 326 to 349 and 405 to 419; these read QDNM…NTVQ and SRTS…QAPS. Residues 430-448 are compositionally biased toward low complexity; that stretch reads QQQQQQQPPKSIKPAPIQQ. 4 stretches are compositionally biased toward polar residues: residues 472–502, 522–532, 546–565, and 575–591; these read SQEQ…QHGG, QQAVSYTQQQP, GGTS…NWGS, and PFTQ…NGSG. The segment at 674–702 adopts a C3H1-type zinc-finger fold; that stretch reads FRPWKPCFIYQQQGWCPYGENCKFMHDLR.

The protein is Zinc finger CCCH domain-containing protein 62 of Oryza sativa subsp. japonica (Rice).